A 677-amino-acid chain; its full sequence is Pentatricopeptide repeat-containing protein At5g39350 (677 aa).

16 PPR repeats span residues 48–78, 79–113, 116–146, 151–181, 182–216, 217–251, 252–282, 283–317, 318–352, 353–383, 384–418, 419–453, 454–488, 489–523, 524–554, and 560–590; these read SGHI…MPQS, SLLS…GVKC, DGYT…ILRS, DKYV…MKNR, DVIS…SVDL, DHAT…RLGD, KIEV…MERR, DVIT…GVRP, NAVT…QVYS, DIII…ASKY, HTGP…DVEP, NIAT…GFMS, SLDA…HKSK, DVVL…GVTP, NEIT…MLEH, and RSNH…IPFE. A type E motif region spans residues 595-670; the sequence is VWGALLAACV…KPGHSTIEIR (76 aa).

Belongs to the PPR family. PCMP-E subfamily.

The polypeptide is Pentatricopeptide repeat-containing protein At5g39350 (PCMP-E16) (Arabidopsis thaliana (Mouse-ear cress)).